Here is a 175-residue protein sequence, read N- to C-terminus: MGIKSIVINEQQIEEGCQKAVNWCNAKFNNKKVIVLGILKGCIPFLGKVISKFSFDLQLDFMAVASYHGSHVQKQPPKIVLDMSHDPKDKDILLIEDIVDSGRSIKLVIDLLKTRHAKSITLISLIEKIKPKAFDINIDFSCFKVKDNFLVGFGLDYDGFYRNLPYVGVFEPDNP.

The diphosphate site is built by Lys-40 and Gly-41. Mg(2+)-binding residues include Glu-96 and Asp-97. Asp-100 functions as the Proton acceptor in the catalytic mechanism. Residues Lys-128, 149 to 150 (FL), and Asp-156 each bind GMP. Arg-162 is a diphosphate binding site.

This sequence belongs to the purine/pyrimidine phosphoribosyltransferase family. Mg(2+) is required as a cofactor.

It localises to the cytoplasm. It catalyses the reaction IMP + diphosphate = hypoxanthine + 5-phospho-alpha-D-ribose 1-diphosphate. The catalysed reaction is GMP + diphosphate = guanine + 5-phospho-alpha-D-ribose 1-diphosphate. The protein operates within purine metabolism; IMP biosynthesis via salvage pathway; IMP from hypoxanthine: step 1/1. It participates in purine metabolism; GMP biosynthesis via salvage pathway; GMP from guanine: step 1/1. Functionally, purine salvage pathway enzyme that catalyzes the transfer of the ribosyl-5-phosphate group from 5-phospho-alpha-D-ribose 1-diphosphate (PRPP) to the N9 position of the 6-oxopurines hypoxanthine and guanine to form the corresponding ribonucleotides IMP (inosine 5'-monophosphate) and GMP (guanosine 5'-monophosphate), with the release of PPi. The polypeptide is Hypoxanthine-guanine phosphoribosyltransferase (hpt) (Mycoplasma genitalium (strain ATCC 33530 / DSM 19775 / NCTC 10195 / G37) (Mycoplasmoides genitalium)).